The primary structure comprises 508 residues: Phosphoenolpyruvate carboxylase (508 aa).

This sequence belongs to the PEPCase type 2 family. Homotetramer. Requires Mg(2+) as cofactor.

It catalyses the reaction oxaloacetate + phosphate = phosphoenolpyruvate + hydrogencarbonate. Its function is as follows. Catalyzes the irreversible beta-carboxylation of phosphoenolpyruvate (PEP) to form oxaloacetate (OAA), a four-carbon dicarboxylic acid source for the tricarboxylic acid cycle. This Picrophilus torridus (strain ATCC 700027 / DSM 9790 / JCM 10055 / NBRC 100828 / KAW 2/3) protein is Phosphoenolpyruvate carboxylase.